Here is a 552-residue protein sequence, read N- to C-terminus: Hyaluronan synthase 2 (552 aa).

Residues 1–11 (MHCERFLCILR) lie on the Cytoplasmic side of the membrane. Residues 12-32 (IIGTTLFGVSLLLGITAAYIV) traverse the membrane as a helical segment. At 33-45 (GYQFIQTDNYYFS) the chain is on the extracellular side. A helical transmembrane segment spans residues 46–66 (FGLYGAFLASHLIIQSLFAFL). Residues 67–374 (EHRKMKKSLE…NAMWFHKHHL (308 aa)) are Cytoplasmic-facing. Position 110 is a phosphothreonine (T110). A Glycyl lysine isopeptide (Lys-Gly) (interchain with G-Cter in ubiquitin) cross-link involves residue K190. The O-linked (GlcNAc) serine glycan is linked to S221. The residue at position 328 (T328) is a Phosphothreonine. The chain crosses the membrane as a helical span at residues 375 to 395 (WMTYEAVITGFFPFFLIATVI). Residues 396–402 (QLFYRGK) are Extracellular-facing. A helical membrane pass occupies residues 403-423 (IWNILLFLLTVQLVGLIKSSF). Topologically, residues 424-429 (ASCLRG) are cytoplasmic. The chain crosses the membrane as a helical span at residues 430–450 (NIVMVFMSLYSVLYMSSLLPA). Over 451–475 (KMFAIATINKAGWGTSGRKTIVVNF) the chain is Extracellular. A helical transmembrane segment spans residues 476 to 496 (IGLIPVSVWFTILLGGVIFTI). At 497 to 510 (YKESKKPFSESKQT) the chain is on the cytoplasmic side. Residues 511–531 (VLIVGTLLYACYWVMLLTLYV) traverse the membrane as a helical segment. The Extracellular portion of the chain corresponds to 532-552 (VLINKCGRRKKGQQYDMVLDV).

The protein belongs to the NodC/HAS family. In terms of assembly, homodimer; dimerization promotes enzymatic activity. Forms heterodimer with HAS3. Forms heterodimer with HAS1. Requires Mg(2+) as cofactor. Phosphorylation at Thr-328 is essential for hyaluronan synthase activity. In terms of processing, O-GlcNAcylation at Ser-221 increases the stability of HAS2 and plasma membrane localization. Post-translationally, ubiquitination at Lys-190; this ubiquitination is essential for hyaluronan synthase activity and homo- or hetero-oligomerization. Can also be poly-ubiquitinated. Deubiquitinated by USP17L22/USP17 and USP4. USP17L22/USP17 efficiently removes 'Lys-63'- and 'Lys-48'-linked polyubiquitin chains, whereas USP4 preferentially removes monoubiquitination and, partially, both 'Lys-63'- and 'Lys-48'-linked polyubiquitin chain. Overexpressed in skin fibroblasts.

The protein localises to the cell membrane. It localises to the endoplasmic reticulum membrane. The protein resides in the vesicle. It is found in the golgi apparatus membrane. Its subcellular location is the lysosome. It catalyses the reaction [hyaluronan](n) + UDP-N-acetyl-alpha-D-glucosamine = N-acetyl-beta-D-glucosaminyl-(1-&gt;4)-[hyaluronan](n) + UDP + H(+). The enzyme catalyses N-acetyl-beta-D-glucosaminyl-(1-&gt;4)-[hyaluronan](n) + UDP-alpha-D-glucuronate = [hyaluronan](n+1) + UDP + H(+). Its pathway is glycan biosynthesis; hyaluronan biosynthesis. Its function is as follows. Catalyzes the addition of GlcNAc or GlcUA monosaccharides to the nascent hyaluronan polymer. Therefore, it is essential to hyaluronan synthesis a major component of most extracellular matrices that has a structural role in tissues architectures and regulates cell adhesion, migration and differentiation. This is one of three isoenzymes responsible for cellular hyaluronan synthesis and it is particularly responsible for the synthesis of high molecular mass hyaluronan. The sequence is that of Hyaluronan synthase 2 (Has2) from Heterocephalus glaber (Naked mole rat).